The primary structure comprises 274 residues: Serine/threonine-protein kinase 1 (274 aa).

The 249-residue stretch at 17–265 (ARTALHLVNG…YEVIQKNTYW (249 aa)) folds into the Protein kinase domain. ATP-binding positions include 23–31 (LVNGKFGKV) and Lys46. Residue Asp133 is the Proton acceptor of the active site.

The protein belongs to the protein kinase superfamily. Ser/Thr protein kinase family.

The enzyme catalyses L-seryl-[protein] + ATP = O-phospho-L-seryl-[protein] + ADP + H(+). The catalysed reaction is L-threonyl-[protein] + ATP = O-phospho-L-threonyl-[protein] + ADP + H(+). Its function is as follows. In vitro, can phosphorylate histone H1. This is Serine/threonine-protein kinase 1 (PK1) from Lymantria dispar multicapsid nuclear polyhedrosis virus (LdMNPV).